The sequence spans 148 residues: HTH-type transcriptional regulator Rv2324 (148 aa).

The region spanning 4–65 is the HTH asnC-type domain; that stretch reads LDDTDERILA…VVDRNALGWN (62 aa). Positions 23-42 form a DNA-binding region, H-T-H motif; that stretch reads FAEIGHKVSLSAPAVKRRVD.

As to quaternary structure, homodimer. Forms oligomers.

The DNA-binding activity of Rv2324 is modulated by interaction of Rv2324 with amino acids. Aspartate is the only effector amino acid that completely abolishes DNA binding. The majority of amino acids induce a dimer-tetramer or dimer-hexamer oligomeric transition. In response to amino-acid binding, adopts an open quaternary association, which is a part of the functional requirement to bind to non-symmetrically distributed target DNA binding sites. Functionally, transcriptional regulator involved in growth, DNA replication and damage control. Plays a crucial role in regulating survival and growth of M.tuberculosis. Could function as a global regulator in both the latent/persistent and active phases of growth. Binds to its own promoter region and to promoters of multiple metabolic genes, such as serB2, lat, ald and roc operon. In vitro, interacts with intrinsically curved and non-curved DNA molecules, and with both supercoiled and linear DNA, with higher affinity for supercoiled DNA. Binds to DNA recombination, replication and repair intermediates. This Mycobacterium tuberculosis (strain ATCC 25618 / H37Rv) protein is HTH-type transcriptional regulator Rv2324.